The primary structure comprises 274 residues: Halorhodopsin (274 aa).

Positions 1 to 21 are excised as a propeptide; it reads MSITSVPGVVDAGVLGAQSAA. Over 22–25 the chain is Extracellular; that stretch reads AVRE. Residues 26-51 form a helical membrane-spanning segment; it reads NALLSSSLWVNVALAGIAILVFVYMG. Residues 52–57 are Cytoplasmic-facing; sequence RTIRPG. Residues 58–81 form a helical membrane-spanning segment; it reads RPRLIWGATLMIPLVSISSYLGLL. Topologically, residues 82 to 105 are extracellular; that stretch reads SGLTVGMIEMPAGHALAGEMVRSQ. Residues glutamine 105, threonine 111, and serine 115 each contribute to the chloride site. The helical transmembrane segment at 106 to 127 threads the bilayer; that stretch reads WGRYLTWALSTPMILLALGLLA. At 128 to 130 the chain is on the cytoplasmic side; the sequence is DVD. A helical transmembrane segment spans residues 131–154; that stretch reads LGSLFTVIAADIGMCVTGLAAAMT. At 155–157 the chain is on the extracellular side; sequence TSA. A helical transmembrane segment spans residues 158–180; the sequence is LLFRWAFYAISCAFFVVVLSALV. Over 181–192 the chain is Cytoplasmic; sequence TDWAASASSAGT. A helical transmembrane segment spans residues 193–216; it reads AEIFDTLRVLTVVLWLGYPIVWAV. The Extracellular segment spans residues 217 to 226; that stretch reads GVEGLALVQS. Residues 227 to 255 traverse the membrane as a helical segment; it reads VGVTSWAYSVLDVFAKYVFAFILLRWVAN. An N6-(retinylidene)lysine modification is found at lysine 242. The Cytoplasmic segment spans residues 256-274; it reads NERTVAVAGQTLGTMSSDD.

It belongs to the archaeal/bacterial/fungal opsin family. Homotrimer.

The protein localises to the cell membrane. Its function is as follows. Light-driven chloride pump. The sequence is that of Halorhodopsin (hop) from Halobacterium salinarum (strain ATCC 29341 / DSM 671 / R1).